We begin with the raw amino-acid sequence, 493 residues long: Glutamate--tRNA ligase (493 aa).

Positions 10 to 20 (PSPTGDPHVGT) match the 'HIGH' region motif. The short motif at 251 to 255 (KLSKR) is the 'KMSKS' region element. Residue Lys-254 participates in ATP binding.

The protein belongs to the class-I aminoacyl-tRNA synthetase family. Glutamate--tRNA ligase type 1 subfamily. As to quaternary structure, monomer.

Its subcellular location is the cytoplasm. The catalysed reaction is tRNA(Glu) + L-glutamate + ATP = L-glutamyl-tRNA(Glu) + AMP + diphosphate. Its function is as follows. Catalyzes the attachment of glutamate to tRNA(Glu) in a two-step reaction: glutamate is first activated by ATP to form Glu-AMP and then transferred to the acceptor end of tRNA(Glu). This Pseudomonas putida (strain GB-1) protein is Glutamate--tRNA ligase.